Here is a 398-residue protein sequence, read N- to C-terminus: Cysteine desulfurase (398 aa).

Pyridoxal 5'-phosphate-binding positions include 74–75, N155, Q182, and 202–204; these read GT and CGH. K205 is subject to N6-(pyridoxal phosphate)lysine. Basic and acidic residues predominate over residues 230 to 244; sequence GHQERSRRAGNGERA. The tract at residues 230-253 is disordered; the sequence is GHQERSRRAGNGERAGHRRAGGGA. The active-site Cysteine persulfide intermediate is the C327. C327 provides a ligand contact to [2Fe-2S] cluster.

The protein belongs to the class-V pyridoxal-phosphate-dependent aminotransferase family. NifS/IscS subfamily. In terms of assembly, homodimer. Pyridoxal 5'-phosphate is required as a cofactor.

It carries out the reaction (sulfur carrier)-H + L-cysteine = (sulfur carrier)-SH + L-alanine. Functionally, catalyzes the removal of elemental sulfur atoms from cysteine to produce alanine. Seems to participate in the biosynthesis of the nitrogenase metalloclusters by providing the inorganic sulfur required for the Fe-S core formation. This is Cysteine desulfurase from Azospirillum brasilense.